We begin with the raw amino-acid sequence, 592 residues long: Aspartate--tRNA ligase (592 aa).

Glutamate 173 contributes to the L-aspartate binding site. Residues 197-200 are aspartate; it reads QLFK. Arginine 219 provides a ligand contact to L-aspartate. Residues 219 to 221 and glutamine 228 contribute to the ATP site; that span reads RDE. Histidine 448 serves as a coordination point for L-aspartate. Glutamate 482 lines the ATP pocket. Residue arginine 489 participates in L-aspartate binding. Residue 534-537 coordinates ATP; the sequence is GLDR.

The protein belongs to the class-II aminoacyl-tRNA synthetase family. Type 1 subfamily. As to quaternary structure, homodimer.

The protein localises to the cytoplasm. The enzyme catalyses tRNA(Asp) + L-aspartate + ATP = L-aspartyl-tRNA(Asp) + AMP + diphosphate. Its function is as follows. Catalyzes the attachment of L-aspartate to tRNA(Asp) in a two-step reaction: L-aspartate is first activated by ATP to form Asp-AMP and then transferred to the acceptor end of tRNA(Asp). The chain is Aspartate--tRNA ligase from Shewanella baltica (strain OS155 / ATCC BAA-1091).